A 254-amino-acid polypeptide reads, in one-letter code: Sec-independent protein translocase protein TatCy (254 aa).

Helical transmembrane passes span 24–44 (IVAL…KPII), 67–87 (LYVF…PVIL), 112–132 (VSIL…FPFV), 157–177 (FLLQ…ILMF), 187–207 (MFLA…AALI), and 212–232 (LLSH…SILI).

It belongs to the TatC family. In terms of assembly, forms a complex with TatAy. Two types of complexes exist: one composed of TatAy and TatCy, and another composed only of TatAy.

Its subcellular location is the cell membrane. In terms of biological role, part of the twin-arginine translocation (Tat) system that transports large folded proteins containing a characteristic twin-arginine motif in their signal peptide across membranes. Required for YwbN secretion. The sequence is that of Sec-independent protein translocase protein TatCy from Bacillus subtilis (strain 168).